A 123-amino-acid chain; its full sequence is Small ribosomal subunit protein uS13 (123 aa).

Residues 93 to 123 are disordered; it reads HRKGLPVRGQNTKNNARTRKGPAKAIAGKKK. Basic residues predominate over residues 108–123; it reads ARTRKGPAKAIAGKKK.

It belongs to the universal ribosomal protein uS13 family. Part of the 30S ribosomal subunit. Forms a loose heterodimer with protein S19. Forms two bridges to the 50S subunit in the 70S ribosome.

Its function is as follows. Located at the top of the head of the 30S subunit, it contacts several helices of the 16S rRNA. In the 70S ribosome it contacts the 23S rRNA (bridge B1a) and protein L5 of the 50S subunit (bridge B1b), connecting the 2 subunits; these bridges are implicated in subunit movement. Contacts the tRNAs in the A and P-sites. This is Small ribosomal subunit protein uS13 from Leuconostoc mesenteroides subsp. mesenteroides (strain ATCC 8293 / DSM 20343 / BCRC 11652 / CCM 1803 / JCM 6124 / NCDO 523 / NBRC 100496 / NCIMB 8023 / NCTC 12954 / NRRL B-1118 / 37Y).